Here is a 113-residue protein sequence, read N- to C-terminus: Integration host factor subunit alpha (113 aa).

The tract at residues alanine 88–glutamate 113 is disordered. A compositionally biased stretch (acidic residues) spans aspartate 95–glutamate 113.

It belongs to the bacterial histone-like protein family. As to quaternary structure, heterodimer of an alpha and a beta chain.

Its function is as follows. This protein is one of the two subunits of integration host factor, a specific DNA-binding protein that functions in genetic recombination as well as in transcriptional and translational control. The polypeptide is Integration host factor subunit alpha (Anaeromyxobacter dehalogenans (strain 2CP-C)).